The primary structure comprises 272 residues: tRNA pseudouridine synthase B (272 aa).

The active-site Nucleophile is the D38.

This sequence belongs to the pseudouridine synthase TruB family. Type 1 subfamily.

It catalyses the reaction uridine(55) in tRNA = pseudouridine(55) in tRNA. Responsible for synthesis of pseudouridine from uracil-55 in the psi GC loop of transfer RNAs. The polypeptide is tRNA pseudouridine synthase B (Campylobacter jejuni subsp. jejuni serotype O:23/36 (strain 81-176)).